Consider the following 972-residue polypeptide: MAEDDTYLGAHEQMFHLDPLTHTIFNPELFQPEMPLPTADGPYLQILEQPKQRGFRFRYVCEGPSHGGLPGASSEKNKKSYPQVKICNYVGPAKVIVQLVTNGKNIHLHAHSLVGKHCEDGICTVTAGPKDMVVGFANLGILHVTKKKVFETLEARMTEACTKGYNPGLLVHPDLAYLQAEGGGDRQLTDREKEIIRQAALQQTKEMDLSVVRLMFTAFLPDSTGSFTRRLEPVVSDAIYDSKAPNASNLKIVRMDRTAGCVTGGEEIYLLCDKVQKDDIQIRFYEEEENGGIWEGFGDFSPTDVHRQFAIVFKTPKYKDVNITKPASVFVQLRRKSDLETSEPKPFLYYPEIKDKEEVQRKRQKLMPNFSDSFGGGSGAGAGGGGMFGSGGGGGGAGSTGPGYGFPHYGFPTYGGITFHPGTTKSNAGMKHGTIDTPSKNDSEGCGKNVDREAVNLSGKVTEPTEQDKESSMGVDEVTLTYTVGIKEENSRFQDNLFLEKAMQLAKRHANALFDYAVTGDVKMLLAVQRHLTAVQDENGDSVLHLAIIHLHAQLVRDLLEVTSGLISDDIINMRNDLYQTPLHLAVITKQEAVVDDLLRAGADLSLLDRLGNSVLHLAAKEGQDKILSILLKHKKAALLMDHPNGEGLNAIHIAVMSNSMPCLLLLVAAGADVNAQERKSGRTALHLAVEHDNISLAGCLLLEGDAHVDSTTYDGTTPLHIAAGRGSTRLAALLKAAGADPLVENFEPLYDLDDSWEKDGEDEGVVPGTTPLDMATNWQVFDILNGKPYEPEFTSDDLLAQGDMKQLTEDAKLQLYKLLEIPDPDKNWATLAQKLGLGILNNAFRLSPAPSKTLMDNYEVSGGTIKELVEALRQMGYTEAIEVIQAAFCAPETAAPSPGKGAPQTLSLPLSSASTRSPVDEVRDDSICDSGVETSFRKLSFTESLTSGSSLLTLNKAPHEYGQEGPIEGKI.

The region spanning 39–246 (ADGPYLQILE…DAIYDSKAPN (208 aa)) is the RHD domain. Cys-61 bears the S-nitrosocysteine; alternate mark. Residue Cys-61 is the site of S-(15-deoxy-Delta12,14-prostaglandin J2-9-yl)cysteine; alternate attachment. A Glycyl lysine isopeptide (Lys-Gly) (interchain with G-Cter in SUMO2) cross-link involves residue Lys-325. Position 337 is a phosphoserine; by PKA (Ser-337). The Nuclear localization signal motif lies at 360–365 (QRKRQK). Positions 372–394 (DSFGGGSGAGAGGGGMFGSGGGG) are GRR. The disordered stretch occupies residues 425–473 (KSNAGMKHGTIDTPSKNDSEGCGKNVDREAVNLSGKVTEPTEQDKESSM). N6-acetyllysine; by EP300 occurs at positions 431 and 440. An interaction with CFLAR region spans residues 435–972 (IDTPSKNDSE…GQEGPIEGKI (538 aa)). Over residues 439–454 (SKNDSEGCGKNVDREA) the composition is skewed to basic and acidic residues. ANK repeat units lie at residues 539–568 (NGDS…GLIS), 578–607 (LYQT…DLSL), 611–640 (LGNS…AALL), 647–676 (EGLN…DVNA), 681–711 (SGRT…HVDS), and 715–744 (DGTT…DPLV). The segment at 647–681 (EGLNAIHIAVMSNSMPCLLLLVAAGADVNAQERKS) is essential for interaction with HIF1AN. The residue at position 675 (Asn-675) is a (3S)-3-hydroxyasparagine; by HIF1AN. Ser-756 is modified (phosphoserine). Residues 768–798 (PGTTPLDMATNWQVFDILNGKPYEPEFTSDD) form an ANK 7 repeat. The 76-residue stretch at 814-889 (LQLYKLLEIP…EAIEVIQAAF (76 aa)) folds into the Death domain. The interval 894 to 926 (TAAPSPGKGAPQTLSLPLSSASTRSPVDEVRDD) is disordered. The span at 905–918 (QTLSLPLSSASTRS) shows a compositional bias: polar residues. A phosphoserine; by GSK3-beta; in vitro mark is found at Ser-908 and Ser-912. The residue at position 927 (Ser-927) is a Phosphoserine. 2 positions are modified to phosphoserine; by IKKB: Ser-931 and Ser-936. Phosphoserine is present on Ser-941. Thr-947 is subject to Phosphothreonine.

In terms of assembly, component of the NF-kappa-B p65-p50 complex. Homodimer; component of the NF-kappa-B p50-p50 complex. Component of the NF-kappa-B p105-p50 complex. Component of the NF-kappa-B p50-c-Rel complex. Component of a complex consisting of the NF-kappa-B p50-p50 homodimer and BCL3. Also interacts with MAP3K8. NF-kappa-B p50 subunit interacts with NCOA3 coactivator, which may coactivate NF-kappa-B dependent expression via its histone acetyltransferase activity. Interacts with TSC22D3; this interaction prevents nuclear translocation and DNA-binding. Interacts with SPAG9 and UNC5CL. NFKB1/p105 interacts with CFLAR; the interaction inhibits p105 processing into p50. NFKB1/p105 forms a ternary complex with MAP3K8 and TNIP2. Interacts with GSK3B; the interaction prevents processing of p105 to p50. NFKB1/p50 interacts with NFKBIE. NFKB1/p50 interacts with NFKBIZ. Nuclear factor NF-kappa-B p50 subunit interacts with NFKBID. Directly interacts with MEN1. Interacts with HIF1AN. Interacts with FEM1A; interaction is direct. Generation of the NF-kappa-B p50 (Nuclear factor NF-kappa-B p50 subunit) transcription factor takes place both cotranslationally and post-translationally via non-mutually exclusive mechanisms. A cotranslational processing allows the production of both p50 and p105 (Nuclear factor NF-kappa-B p105 subunit) from a single NFKB1 mRNA. While translation occurs, the particular unfolded structure after the GRR repeat region acts as a substrate for the proteasome, promoting degradation of the C-terminus. The GRR acts as a proteasomal 'stop signal', protecting the region upstream of the GRR from degradation and promoting generation of p50. It is unclear if limited proteasome degradation during cotranslational processing depends on ubiquitination. NF-kappa-B p50 is also generated post-translationally following ubiquitination by the KPC complex, leading to limited processing by the proteasome downstream of the GRR region, thereby generating p50. Post-translationally, phosphorylation at the C-terminus by IKBKB/IKKB acts as a signal for ubiquitination and promotes either complete degradation or processing to generate the NF-kappa-B p50 (Nuclear factor NF-kappa-B p50 subunit). Phosphorylation at Ser-908 and Ser-912 primes p105 for proteolytic processing in response to TNF-alpha stimulation. Phosphorylation at Ser-927, Ser-931 and Ser-936 are required for BTRC/BTRCP-mediated ubiquitination and proteolysis. Phosphorylation at Ser-931 is also required for ubiquitination by the KPC complex and limited processing to generate NF-kappa-B p50 (Nuclear factor NF-kappa-B p50 subunit). In terms of processing, polyubiquitinated at multiple Lys residues in the C-terminus. Polyubiquitinated by the SCF(FBXW11) and SCF(BTRC) complexes following phosphorylation at Ser-923, Ser-927, Ser-931 and Ser-936, leading to its complete degradation. In contrast, polyubiquitination by the KPC complex following phosphorylation at Ser-931 leads to limited proteosomal processing and generation of the active NF-kappa-B p50 (Nuclear factor NF-kappa-B p50 subunit). S-nitrosylation of Cys-61 affects DNA binding. Post-translationally, the covalent modification of cysteine by 15-deoxy-Delta12,14-prostaglandin-J2 is autocatalytic and reversible. It may occur as an alternative to other cysteine modifications, such as S-nitrosylation and S-palmitoylation.

It localises to the cytoplasm. The protein localises to the nucleus. Its function is as follows. NF-kappa-B is a pleiotropic transcription factor present in almost all cell types and is the endpoint of a series of signal transduction events that are initiated by a vast array of stimuli related to many biological processes such as inflammation, immunity, differentiation, cell growth, tumorigenesis and apoptosis. NF-kappa-B is a homo- or heterodimeric complex formed by the Rel-like domain-containing proteins RELA/p65, RELB, NFKB1/p105, NFKB1/p50, REL and NFKB2/p52 and the heterodimeric p65-p50 complex appears to be most abundant one. The dimers bind at kappa-B sites in the DNA of their target genes and the individual dimers have distinct preferences for different kappa-B sites that they can bind with distinguishable affinity and specificity. Different dimer combinations act as transcriptional activators or repressors, respectively. NF-kappa-B is controlled by various mechanisms of post-translational modification and subcellular compartmentalization as well as by interactions with other cofactors or corepressors. NF-kappa-B complexes are held in the cytoplasm in an inactive state complexed with members of the NF-kappa-B inhibitor (I-kappa-B) family. In a conventional activation pathway, I-kappa-B is phosphorylated by I-kappa-B kinases (IKKs) in response to different activators, subsequently degraded thus liberating the active NF-kappa-B complex which translocates to the nucleus. NF-kappa-B heterodimeric p65-p50 and RelB-p50 complexes are transcriptional activators. The NF-kappa-B p50-p50 homodimer is a transcriptional repressor, but can act as a transcriptional activator when associated with BCL3. NFKB1 appears to have dual functions such as cytoplasmic retention of attached NF-kappa-B proteins by p105 and generation of p50 by a cotranslational processing. The proteasome-mediated process ensures the production of both p50 and p105 and preserves their independent function, although processing of NFKB1/p105 also appears to occur post-translationally. p50 binds to the kappa-B consensus sequence 5'-GGRNNYYCC-3', located in the enhancer region of genes involved in immune response and acute phase reactions. In a complex with MAP3K8, NFKB1/p105 represses MAP3K8-induced MAPK signaling; active MAP3K8 is released by proteasome-dependent degradation of NFKB1/p105. In terms of biological role, P105 is the precursor of the active p50 subunit (Nuclear factor NF-kappa-B p50 subunit) of the nuclear factor NF-kappa-B. Acts as a cytoplasmic retention of attached NF-kappa-B proteins by p105. Constitutes the active form, which associates with RELA/p65 to form the NF-kappa-B p65-p50 complex to form a transcription factor. Together with RELA/p65, binds to the kappa-B consensus sequence 5'-GGRNNYYCC-3', located in the enhancer region of genes involved in immune response and acute phase reactions. The protein is Nuclear factor NF-kappa-B p105 subunit (NFKB1) of Canis lupus familiaris (Dog).